The primary structure comprises 417 residues: F-box protein At3g07870 (417 aa).

Residues 22–68 (GGGLESLPEDIIADIFSRLPISSIARLMFVCRSWRSVLTQHGRLSSS) enclose the F-box domain.

This is F-box protein At3g07870 from Arabidopsis thaliana (Mouse-ear cress).